We begin with the raw amino-acid sequence, 571 residues long: MAVTITKRPPRLTLQVLDIAPETTAIRCLDWDRDRFDIEFALENGTTYNSFLIKGERIALVDTSHAKFGDRYLEQLWQLVNPSDLDYLIVSHTEPDHSGLVKDVLVKAPHVTVVASKVALQFLGDLIHQPFTQQQVKNGDRLDLGKGHVLEFVMAPNLHWPDTILTFDHGTQTLFTCDVFGAHFCNDDPFDSEPELLAPDFKFYYDCLMGPNARSVLSAFKRLESLPPVQLVATGHGPLLRHHLDQWLESYRNWSQEQAKAATTVAIFYAANYGYSNALAEAIERGTAKTGVVVEKMDLLTAEPQDIRELTEIAAGIIIGTPPTTAVAKTALSTIRAAAHAKQAIGVFESGVADAEPAYPLLNQFRDAGLVPSFPVIRVTAAPTDALFQEAEEAGTDMGQWLLRDRTVKQMKALDTDLDKALGRLSGGLYIITAQKGAINSAMLASWVAQASTEPLGVSIAVAKDRAIESFLHVGDTFVLNVLEAENYQPLMRHFLKRFPPGADRFAHVKTYPASNGSPILADALAYMECTVVSRLDAHDHWIVYSTVDSGRVSKPDGMTAVHHRKVGNHY.

Residues 43–236 are zinc metallo-hydrolase; the sequence is ENGTTYNSFL…PPVQLVATGH (194 aa). Fe cation is bound by residues His-92, Glu-94, Asp-96, His-159, Asp-178, and His-236. The Flavodoxin-like domain occupies 265 to 426; sequence VAIFYAANYG…DLDKALGRLS (162 aa). The flavodoxin-reductase-like stretch occupies residues 427–571; it reads GGLYIITAQK…VHHRKVGNHY (145 aa).

In the N-terminal section; belongs to the zinc metallo-hydrolase group 3 family. This sequence in the C-terminal section; belongs to the flavodoxin reductase family. It depends on Fe cation as a cofactor.

Functionally, mediates electron transfer from NADH to oxygen, reducing it to water. This modular protein has 3 redox cofactors, in other organisms the same activity requires 2 or 3 proteins. The protein is Putative diflavin flavoprotein A 1 (dfa1) of Thermosynechococcus vestitus (strain NIES-2133 / IAM M-273 / BP-1).